Here is a 211-residue protein sequence, read N- to C-terminus: Calcipressin-like protein (211 aa).

A phosphoserine mark is found at Ser-113 and Ser-117. Thr-182 carries the phosphothreonine modification.

The protein belongs to the RCAN family.

Its function is as follows. Inhibits calcineurin-dependent transcriptional responses by binding to the catalytic domain of calcineurin. This chain is Calcipressin-like protein (RCN1), found in Saccharomyces cerevisiae (strain ATCC 204508 / S288c) (Baker's yeast).